Here is a 260-residue protein sequence, read N- to C-terminus: DNA repair protein RecO (260 aa).

Belongs to the RecO family.

Its function is as follows. Involved in DNA repair and RecF pathway recombination. The protein is DNA repair protein RecO of Levilactobacillus brevis (strain ATCC 367 / BCRC 12310 / CIP 105137 / JCM 1170 / LMG 11437 / NCIMB 947 / NCTC 947) (Lactobacillus brevis).